We begin with the raw amino-acid sequence, 365 residues long: Sesquiterpene synthase 3 (365 aa).

Mg(2+)-binding residues include aspartate 117, asparagine 253, serine 257, and glutamate 261. Residues 117–121 (DDWSD) carry the DDXXD motif motif. Positions 253-261 (NDILSYNRE) match the NSE/DTE motif motif. (2E,6E)-farnesyl diphosphate contacts are provided by arginine 341 and tyrosine 342.

It belongs to the terpene synthase family. It depends on Mg(2+) as a cofactor.

The catalysed reaction is (2E,6E)-farnesyl diphosphate = delta-cadinene + diphosphate. Functionally, terpene cyclase that catalyzes the cyclization of farnesyl diphosphate (FPP) to various sesquiterpenes, including beta-elemene gamma-cadinene, delta-cadinene, and alpha-cadinene. The protein is Sesquiterpene synthase 3 of Postia placenta (strain ATCC 44394 / Madison 698-R) (Brown rot fungus).